The following is a 402-amino-acid chain: Selenoprotein P (402 aa).

The signal sequence occupies residues Met1–Thr19. Sec59 is a non-standard amino acid (selenocysteine). N-linked (GlcNAc...) asparagine glycans are attached at residues Asn83 and Asn174. A disordered region spans residues Lys196–Leu291. Basic residues predominate over residues Arg203–His231. 13 consecutive repeat copies span residues His204–His205, His206–Pro207, His208–Pro209, His210–Ser211, His212–Pro213, His214–Pro215, His216–Pro217, His218–Pro219, His220–Pro221, His222–Pro223, His224–Pro225, His226–Pro227, and His228–His229. Positions His204–His229 are 13 X 2 AA tandem repeats of H-[PHS]. Positions Gln232–Thr247 are enriched in basic and acidic residues. Residues Leu259–Pro269 show a composition bias toward basic residues. A Phosphoserine modification is found at Ser284. Residues Sec297, Sec307, Sec338, Sec350, Sec363, Sec365, Sec372, Sec388, Sec390, Sec397, and Sec399 are each a non-standard amino acid (selenocysteine). Positions Leu367–Asn402 are disordered.

It belongs to the selenoprotein P family. Phosphorylation sites are present in the extracellular medium. In terms of tissue distribution, brain and kidney. Most prominently expressed in the cerebellar cortex, hippocampus and olfactory bulb.

Its subcellular location is the secreted. Constitutes a major selenium pool in the brain and may play an important role in developing and/or modulating the morphology of neurons and/or glial cells. The chain is Selenoprotein P from Bos taurus (Bovine).